Reading from the N-terminus, the 143-residue chain is Transcriptional regulator MraZ (143 aa).

SpoVT-AbrB domains follow at residues 5–47 (EFEH…PMTE) and 76–119 (ATEC…SAER).

It belongs to the MraZ family. In terms of assembly, forms oligomers.

The protein localises to the cytoplasm. Its subcellular location is the nucleoid. The polypeptide is Transcriptional regulator MraZ (Levilactobacillus brevis (strain ATCC 367 / BCRC 12310 / CIP 105137 / JCM 1170 / LMG 11437 / NCIMB 947 / NCTC 947) (Lactobacillus brevis)).